A 38-amino-acid polypeptide reads, in one-letter code: Large ribosomal subunit protein bL36 (38 aa).

Belongs to the bacterial ribosomal protein bL36 family.

This Methylacidiphilum infernorum (isolate V4) (Methylokorus infernorum (strain V4)) protein is Large ribosomal subunit protein bL36.